A 431-amino-acid chain; its full sequence is Alpha-gurjunene synthase (431 aa).

Mg(2+) is bound by residues aspartate 126 and aspartate 130. Residue arginine 267 participates in (2E,6E)-farnesyl diphosphate binding. Mg(2+) contacts are provided by asparagine 321 and serine 325. Lysine 328 lines the (2E,6E)-farnesyl diphosphate pocket. Glutamate 329 contacts Mg(2+). (2E,6E)-farnesyl diphosphate is bound at residue 412 to 413; it reads RY.

This sequence belongs to the terpene synthase family. Requires Mg(2+) as cofactor.

It carries out the reaction (2E,6E)-farnesyl diphosphate = (-)-alpha-gurjunene + diphosphate. The catalysed reaction is (2E,6E)-farnesyl diphosphate + H2O = 5-hydroxy-alpha-gurjunene + diphosphate. It functions in the pathway secondary metabolite biosynthesis; terpenoid biosynthesis. In terms of biological role, catalyzes the conversion of (2E,6E)-farnesyl diphosphate (FPP) into the sesquiterpene alcohols (-)-alpha-gurjunene and 5-hydroxy-alpha-gurjunene. Other unidentified sesquiterpene alcohols found to be catalyzed by MTPSL4 may arise from carbocation reaction intermediates along the catalytic cascade to gurjunene being quenched by a water molecule, yielding formation of the alcohols. The polypeptide is Alpha-gurjunene synthase (Marchantia polymorpha (Common liverwort)).